The primary structure comprises 727 residues: Polyribonucleotide nucleotidyltransferase (727 aa).

Residues Asp-488 and Asp-494 each coordinate Mg(2+). Positions 555–614 (PKLYTMKINPEKIRDVIGKGGATIRALTDETGCQINIEEDGTITIAATEAAKADEAKRRI) constitute a KH domain. The 69-residue stretch at 624–692 (GKVYEGPVTK…DKGRVKLSMK (69 aa)) folds into the S1 motif domain. The segment at 691 to 727 (MKALADRPAGDSGRPAPAERGERRERRDGGASEQQQQ) is disordered. The span at 707-720 (PAERGERRERRDGG) shows a compositional bias: basic and acidic residues.

The protein belongs to the polyribonucleotide nucleotidyltransferase family. Requires Mg(2+) as cofactor.

The protein localises to the cytoplasm. It carries out the reaction RNA(n+1) + phosphate = RNA(n) + a ribonucleoside 5'-diphosphate. Involved in mRNA degradation. Catalyzes the phosphorolysis of single-stranded polyribonucleotides processively in the 3'- to 5'-direction. The polypeptide is Polyribonucleotide nucleotidyltransferase (Acidovorax ebreus (strain TPSY) (Diaphorobacter sp. (strain TPSY))).